Here is a 361-residue protein sequence, read N- to C-terminus: Phosphoribosylformylglycinamidine cyclo-ligase (361 aa).

This sequence belongs to the AIR synthase family.

The protein localises to the cytoplasm. It catalyses the reaction 2-formamido-N(1)-(5-O-phospho-beta-D-ribosyl)acetamidine + ATP = 5-amino-1-(5-phospho-beta-D-ribosyl)imidazole + ADP + phosphate + H(+). It functions in the pathway purine metabolism; IMP biosynthesis via de novo pathway; 5-amino-1-(5-phospho-D-ribosyl)imidazole from N(2)-formyl-N(1)-(5-phospho-D-ribosyl)glycinamide: step 2/2. The sequence is that of Phosphoribosylformylglycinamidine cyclo-ligase from Bartonella henselae (strain ATCC 49882 / DSM 28221 / CCUG 30454 / Houston 1) (Rochalimaea henselae).